The following is a 314-amino-acid chain: Protoheme IX farnesyltransferase (314 aa).

Transmembrane regions (helical) follow at residues 31–51, 52–72, 119–139, 152–172, 179–199, 225–245, 247–267, and 284–304; these read VMSLVIFTALVGMAMAPGHFH, PVLAITSLLCIAVGAGASGAL, ILVNWIAGALLAFTIFFYVVI, IVIGGAAGALPPVVAWAAVTG, LLLFAIIFFWTPPHFWALALF, ILLYTIVLIAVAAAPWALGYF, AVYGVVSLILGAGMLVLAINV, and FAFSILYLFALFATLLAEVVF.

This sequence belongs to the UbiA prenyltransferase family. Protoheme IX farnesyltransferase subfamily.

It is found in the cell inner membrane. The enzyme catalyses heme b + (2E,6E)-farnesyl diphosphate + H2O = Fe(II)-heme o + diphosphate. It participates in porphyrin-containing compound metabolism; heme O biosynthesis; heme O from protoheme: step 1/1. Its function is as follows. Converts heme B (protoheme IX) to heme O by substitution of the vinyl group on carbon 2 of heme B porphyrin ring with a hydroxyethyl farnesyl side group. The chain is Protoheme IX farnesyltransferase from Bradyrhizobium diazoefficiens (strain JCM 10833 / BCRC 13528 / IAM 13628 / NBRC 14792 / USDA 110).